A 217-amino-acid polypeptide reads, in one-letter code: 3,4-dihydroxy-2-butanone 4-phosphate synthase (217 aa).

D-ribulose 5-phosphate is bound by residues 37–38, aspartate 42, 150–154, and glutamate 174; these read RE and RGGHT. Glutamate 38 contributes to the Mg(2+) binding site. Histidine 153 contributes to the Mg(2+) binding site.

The protein belongs to the DHBP synthase family. In terms of assembly, homodimer. Mg(2+) is required as a cofactor. It depends on Mn(2+) as a cofactor.

It catalyses the reaction D-ribulose 5-phosphate = (2S)-2-hydroxy-3-oxobutyl phosphate + formate + H(+). The protein operates within cofactor biosynthesis; riboflavin biosynthesis; 2-hydroxy-3-oxobutyl phosphate from D-ribulose 5-phosphate: step 1/1. Functionally, catalyzes the conversion of D-ribulose 5-phosphate to formate and 3,4-dihydroxy-2-butanone 4-phosphate. In Enterobacter sp. (strain 638), this protein is 3,4-dihydroxy-2-butanone 4-phosphate synthase.